Consider the following 155-residue polypeptide: Large ribosomal subunit protein eL24B (155 aa).

Position 7 is a phosphoserine (Ser7). Residues Glu66 to Arg155 form a disordered region. Residues Leu89 to Lys129 are compositionally biased toward basic and acidic residues.

Belongs to the eukaryotic ribosomal protein eL24 family. Component of the large ribosomal subunit (LSU). Mature yeast ribosomes consist of a small (40S) and a large (60S) subunit. The 40S small subunit contains 1 molecule of ribosomal RNA (18S rRNA) and 33 different proteins (encoded by 57 genes). The large 60S subunit contains 3 rRNA molecules (25S, 5.8S and 5S rRNA) and 46 different proteins (encoded by 81 genes).

Its subcellular location is the cytoplasm. Component of the ribosome, a large ribonucleoprotein complex responsible for the synthesis of proteins in the cell. The small ribosomal subunit (SSU) binds messenger RNAs (mRNAs) and translates the encoded message by selecting cognate aminoacyl-transfer RNA (tRNA) molecules. The large subunit (LSU) contains the ribosomal catalytic site termed the peptidyl transferase center (PTC), which catalyzes the formation of peptide bonds, thereby polymerizing the amino acids delivered by tRNAs into a polypeptide chain. The nascent polypeptides leave the ribosome through a tunnel in the LSU and interact with protein factors that function in enzymatic processing, targeting, and the membrane insertion of nascent chains at the exit of the ribosomal tunnel. This chain is Large ribosomal subunit protein eL24B, found in Saccharomyces cerevisiae (strain ATCC 204508 / S288c) (Baker's yeast).